Here is a 340-residue protein sequence, read N- to C-terminus: 4-dimethylallyltryptophan N-methyltransferase easF (340 aa).

It belongs to the methyltransferase superfamily. In terms of assembly, homodimer.

The catalysed reaction is 4-(3-methylbut-2-enyl)-L-tryptophan + S-adenosyl-L-methionine = 4-(3-methylbut-2-enyl)-L-abrine + S-adenosyl-L-homocysteine + H(+). Its pathway is alkaloid biosynthesis; ergot alkaloid biosynthesis. 4-dimethylallyltryptophan N-methyltransferase; part of the gene cluster that mediates the biosynthesis of fungal ergot alkaloid. DmaW catalyzes the first step of ergot alkaloid biosynthesis by condensing dimethylallyl diphosphate (DMAP) and tryptophan to form 4-dimethylallyl-L-tryptophan. The second step is catalyzed by the methyltransferase easF that methylates 4-dimethylallyl-L-tryptophan in the presence of S-adenosyl-L-methionine, resulting in the formation of 4-dimethylallyl-L-abrine. The catalase easC and the FAD-dependent oxidoreductase easE then transform 4-dimethylallyl-L-abrine to chanoclavine-I which is further oxidized by easD in the presence of NAD(+), resulting in the formation of chanoclavine-I aldehyde. Chanoclavine-I aldehyde is the precursor of ergoamides and ergopeptines in Clavicipitaceae, and clavine-type alcaloids such as fumiclavine in Trichocomaceae. However, the metabolites downstream of chanoclavine-I aldehyde in Arthrodermataceae have not been identified yet. This is 4-dimethylallyltryptophan N-methyltransferase easF from Trichophyton verrucosum (strain HKI 0517).